We begin with the raw amino-acid sequence, 476 residues long: Protein DETOXIFICATION 3 (476 aa).

12 consecutive transmembrane segments (helical) span residues 35-55 (AAPM…SVMV), 66-86 (GVAL…FGLA), 117-137 (IPIC…LISL), 146-166 (VAGS…FFIP), 185-205 (LTTL…FGLG), 208-228 (GAAM…SCYV), 260-280 (AAMV…SGLL), 289-309 (VLSI…GVAA), 331-351 (VLAG…LLFT), 370-390 (VANL…TAVL), 402-422 (IGAL…GVYL), and 433-453 (LWCG…FVTA).

Belongs to the multi antimicrobial extrusion (MATE) (TC 2.A.66.1) family.

It is found in the membrane. The sequence is that of Protein DETOXIFICATION 3 from Arabidopsis thaliana (Mouse-ear cress).